A 215-amino-acid polypeptide reads, in one-letter code: Large ribosomal subunit protein uL3 (215 aa).

An N5-methylglutamine modification is found at Gln-156.

The protein belongs to the universal ribosomal protein uL3 family. As to quaternary structure, part of the 50S ribosomal subunit. Forms a cluster with proteins L14 and L19. Post-translationally, methylated by PrmB.

Functionally, one of the primary rRNA binding proteins, it binds directly near the 3'-end of the 23S rRNA, where it nucleates assembly of the 50S subunit. The sequence is that of Large ribosomal subunit protein uL3 from Xylella fastidiosa (strain M12).